A 308-amino-acid polypeptide reads, in one-letter code: Pantothenate kinase (308 aa).

Gly-93–Ser-100 provides a ligand contact to ATP.

The protein belongs to the prokaryotic pantothenate kinase family.

Its subcellular location is the cytoplasm. It catalyses the reaction (R)-pantothenate + ATP = (R)-4'-phosphopantothenate + ADP + H(+). Its pathway is cofactor biosynthesis; coenzyme A biosynthesis; CoA from (R)-pantothenate: step 1/5. The protein is Pantothenate kinase of Corynebacterium diphtheriae (strain ATCC 700971 / NCTC 13129 / Biotype gravis).